The chain runs to 372 residues: Aminomethyltransferase (372 aa).

This sequence belongs to the GcvT family. The glycine cleavage system is composed of four proteins: P, T, L and H.

It carries out the reaction N(6)-[(R)-S(8)-aminomethyldihydrolipoyl]-L-lysyl-[protein] + (6S)-5,6,7,8-tetrahydrofolate = N(6)-[(R)-dihydrolipoyl]-L-lysyl-[protein] + (6R)-5,10-methylene-5,6,7,8-tetrahydrofolate + NH4(+). Functionally, the glycine cleavage system catalyzes the degradation of glycine. In Burkholderia multivorans (strain ATCC 17616 / 249), this protein is Aminomethyltransferase.